A 728-amino-acid chain; its full sequence is Catalase-peroxidase (728 aa).

The segment at residues 91–218 (WHSAGTYRTA…LAAVQMGLIY (128 aa)) is a cross-link (tryptophyl-tyrosyl-methioninium (Trp-Tyr) (with M-244)). His-92 serves as the catalytic Proton acceptor. The segment at residues 218–244 (YVNPEGPDGNPDPVAAARDIRDTFARM) is a cross-link (tryptophyl-tyrosyl-methioninium (Tyr-Met) (with W-91)). His-259 is a binding site for heme b.

The protein belongs to the peroxidase family. Peroxidase/catalase subfamily. In terms of assembly, homodimer or homotetramer. Requires heme b as cofactor. Formation of the three residue Trp-Tyr-Met cross-link is important for the catalase, but not the peroxidase activity of the enzyme.

It catalyses the reaction H2O2 + AH2 = A + 2 H2O. The catalysed reaction is 2 H2O2 = O2 + 2 H2O. Functionally, bifunctional enzyme with both catalase and broad-spectrum peroxidase activity. This is Catalase-peroxidase from Burkholderia mallei (strain NCTC 10247).